A 691-amino-acid chain; its full sequence is Zinc finger protein 770 (691 aa).

Lys11 participates in a covalent cross-link: Glycyl lysine isopeptide (Lys-Gly) (interchain with G-Cter in SUMO2). C2H2-type zinc fingers lie at residues 27–49 (YVCN…YLIH), 55–77 (FECD…QLTH), and 81–103 (FKCS…QQLH). Residues Lys112, Lys121, and Lys146 each participate in a glycyl lysine isopeptide (Lys-Gly) (interchain with G-Cter in SUMO2) cross-link. C2H2-type zinc fingers lie at residues 160-182 (HACT…VLIH), 188-210 (FKCV…QLTH), and 216-238 (FQCC…KQIH). The interval 258–277 (PLPNKLNANQGGFENGEIGE) is disordered. A Glycyl lysine isopeptide (Lys-Gly) (interchain with G-Cter in SUMO2) cross-link involves residue Lys262. The segment at 294 to 318 (FQCPKCEKCFESEQILNEHSCFAAR) adopts a C2H2-type 7; degenerate zinc-finger fold. Glycyl lysine isopeptide (Lys-Gly) (interchain with G-Cter in SUMO2) cross-links involve residues Lys420 and Lys437. 4 C2H2-type zinc fingers span residues 475–497 (CPCD…YLIH), 503–525 (FGCN…EQTH), 625–647 (YRCS…YLIH), and 653–675 (FECS…QLTH). Lys683 participates in a covalent cross-link: Glycyl lysine isopeptide (Lys-Gly) (interchain with G-Cter in SUMO2).

It belongs to the krueppel C2H2-type zinc-finger protein family.

It localises to the nucleus. Functionally, may be involved in transcriptional regulation. This chain is Zinc finger protein 770 (ZNF770), found in Homo sapiens (Human).